The chain runs to 152 residues: Large ribosomal subunit protein uL15 (152 aa).

The interval 1–56 (MTSTLNTLKSNLGSRKKKLRKGRGIAAGQGASCGFGMRGQKSRSGRPTRPGFEGGQ) is disordered. Residues 14 to 23 (SRKKKLRKGR) show a composition bias toward basic residues. Positions 25 to 37 (IAAGQGASCGFGM) are enriched in gly residues.

Belongs to the universal ribosomal protein uL15 family. As to quaternary structure, part of the 50S ribosomal subunit.

In terms of biological role, binds to the 23S rRNA. The sequence is that of Large ribosomal subunit protein uL15 from Prochlorococcus marinus (strain MIT 9515).